A 184-amino-acid chain; its full sequence is MSEREKITIENIVASTSLAEHLDLSRIALALDGSEYEPEQFPGLIYRLQDPKTAVLIFRSGKVNCTGAKNIEDVKRTIKIIIDKLKAANIEVYDDPDIIVQNIVAVYDLESELNLTDIAMSLGLENVEYEPEQFPGLVYRVEEPRVVLLLFGSGKVVCTGAKEESEIEQAVIKVKKELQKVGLI.

Tandem repeats lie at residues 9-85 (IENI…IDKL) and 100-178 (VQNI…KKEL).

The protein belongs to the TBP family.

General factor that plays a role in the activation of archaeal genes transcribed by RNA polymerase. Binds specifically to the TATA box promoter element which lies close to the position of transcription initiation. The sequence is that of TATA-box-binding protein from Thermoplasma volcanium (strain ATCC 51530 / DSM 4299 / JCM 9571 / NBRC 15438 / GSS1).